The following is a 59-amino-acid chain: Chromatin protein Cren7 (59 aa).

It belongs to the Cren7 family. Monomer. Methylated at multiple sites, to varying extents.

Its subcellular location is the chromosome. It is found in the cytoplasm. Its function is as follows. A chromatin protein, binds double-stranded DNA without sequence specificity. Constrains negative DNA supercoils. The sequence is that of Chromatin protein Cren7 from Pyrobaculum aerophilum (strain ATCC 51768 / DSM 7523 / JCM 9630 / CIP 104966 / NBRC 100827 / IM2).